Consider the following 196-residue polypeptide: Probable malonic semialdehyde reductase RutE (196 aa).

Belongs to the nitroreductase family. HadB/RutE subfamily. Requires FMN as cofactor.

It catalyses the reaction 3-hydroxypropanoate + NADP(+) = 3-oxopropanoate + NADPH + H(+). In terms of biological role, may reduce toxic product malonic semialdehyde to 3-hydroxypropionic acid, which is excreted. In Cronobacter sakazakii (strain ATCC BAA-894) (Enterobacter sakazakii), this protein is Probable malonic semialdehyde reductase RutE.